A 159-amino-acid chain; its full sequence is Cytochrome c-type biogenesis protein CcmE (159 aa).

Topologically, residues 1–23 (MSSQSFHNSPSLRVILKQRKKKR) are cytoplasmic. Residues 24–44 (LLIVLFCCLIIAIATSLITYA) form a helical; Signal-anchor for type II membrane protein membrane-spanning segment. At 45–159 (LRNTVSFFRM…RLNKHHRVEK (115 aa)) the chain is on the periplasmic side. Histidine 138 and tyrosine 142 together coordinate heme.

The protein belongs to the CcmE/CycJ family.

The protein resides in the cell inner membrane. Heme chaperone required for the biogenesis of c-type cytochromes. Transiently binds heme delivered by CcmC and transfers the heme to apo-cytochromes in a process facilitated by CcmF and CcmH. This chain is Cytochrome c-type biogenesis protein CcmE, found in Bartonella henselae (strain ATCC 49882 / DSM 28221 / CCUG 30454 / Houston 1) (Rochalimaea henselae).